Consider the following 262-residue polypeptide: Global transcriptional regulator CodY (262 aa).

A GAF domain region spans residues 1-159 (MATLLEKTRK…ATTVIGVQLS (159 aa)). Positions 207 to 226 (ASVIADKIGITRSVIVNALR) form a DNA-binding region, H-T-H motif.

The protein belongs to the CodY family.

Its subcellular location is the cytoplasm. DNA-binding global transcriptional regulator which is involved in the adaptive response to starvation and acts by directly or indirectly controlling the expression of numerous genes in response to nutrient availability. During rapid exponential growth, CodY is highly active and represses genes whose products allow adaptation to nutrient depletion. The protein is Global transcriptional regulator CodY of Lactococcus lactis subsp. cremoris (strain SK11).